Here is a 243-residue protein sequence, read N- to C-terminus: MMNALGLSVAATSTGSPFHDVCCYGAGIAGNIFALVLFISPLPTFKRIVRNGSTEQFSAMPYIYSLLNCLICLWYGLPFVSYGVVLVATVNSIGALFQLAYTATFIAFADAKNRVKVSSLLVMVFGVFALIVYVSLALFDHQTRQLFVGYLSVASLIFMFASPLSIINLVIRTKSVEYMPFYLSLSMFLMSVSFFAYGVLLHDFFIYIPNGIGTVLGVIQLVLYGYFRKGSREDSLPLLVTHT.

The first 15 residues, 1–15, serve as a signal peptide directing secretion; that stretch reads MMNALGLSVAATSTG. The Extracellular portion of the chain corresponds to 16-24; sequence SPFHDVCCY. The chain crosses the membrane as a helical span at residues 25 to 45; the sequence is GAGIAGNIFALVLFISPLPTF. Residues 27-112 enclose the MtN3/slv 1 domain; sequence GIAGNIFALV…ATFIAFADAK (86 aa). The Cytoplasmic portion of the chain corresponds to 46–56; sequence KRIVRNGSTEQ. A helical transmembrane segment spans residues 57-79; that stretch reads FSAMPYIYSLLNCLICLWYGLPF. The Extracellular portion of the chain corresponds to 80–90; sequence VSYGVVLVATV. A helical membrane pass occupies residues 91–111; sequence NSIGALFQLAYTATFIAFADA. The Cytoplasmic segment spans residues 112-118; sequence KNRVKVS. The helical transmembrane segment at 119 to 139 threads the bilayer; the sequence is SLLVMVFGVFALIVYVSLALF. The Extracellular portion of the chain corresponds to 140–146; the sequence is DHQTRQL. Residues 147-167 traverse the membrane as a helical segment; it reads FVGYLSVASLIFMFASPLSII. Residues 147 to 229 enclose the MtN3/slv 2 domain; that stretch reads FVGYLSVASL…QLVLYGYFRK (83 aa). The Cytoplasmic segment spans residues 168–180; sequence NLVIRTKSVEYMP. The chain crosses the membrane as a helical span at residues 181 to 201; it reads FYLSLSMFLMSVSFFAYGVLL. Topologically, residues 202–203 are extracellular; the sequence is HD. A helical transmembrane segment spans residues 204 to 224; the sequence is FFIYIPNGIGTVLGVIQLVLY. The Cytoplasmic segment spans residues 225-243; it reads GYFRKGSREDSLPLLVTHT.

Belongs to the SWEET sugar transporter family. Forms homooligomers and/or heterooligomers.

The protein resides in the cell membrane. Functionally, mediates both low-affinity uptake and efflux of sugar across the plasma membrane. The sequence is that of Bidirectional sugar transporter SWEET2a (SWEET2A) from Oryza sativa subsp. indica (Rice).